A 388-amino-acid polypeptide reads, in one-letter code: Pepsin A-4 (388 aa).

A signal peptide spans 1-15; the sequence is MKWLLLLGLVALSEC. The propeptide at 16-62 is activation peptide; it reads IMYKVPLIRKKSLRRTLSERGLLKDFLKKHNLNPARKYFPQWEAPTL. One can recognise a Peptidase A1 domain in the interval 76–385; it reads YFGTIGIGTP…DRANNQVGLA (310 aa). The active site involves Asp-94. Residues Cys-107 and Cys-112 are joined by a disulfide bond. Ser-130 is subject to Phosphoserine. Cys-268 and Cys-272 are oxidised to a cystine. Residue Asp-277 is part of the active site. A disulfide bond links Cys-311 and Cys-344.

This sequence belongs to the peptidase A1 family.

The protein resides in the secreted. It catalyses the reaction Preferential cleavage: hydrophobic, preferably aromatic, residues in P1 and P1' positions. Cleaves 1-Phe-|-Val-2, 4-Gln-|-His-5, 13-Glu-|-Ala-14, 14-Ala-|-Leu-15, 15-Leu-|-Tyr-16, 16-Tyr-|-Leu-17, 23-Gly-|-Phe-24, 24-Phe-|-Phe-25 and 25-Phe-|-Tyr-26 bonds in the B chain of insulin.. In terms of biological role, shows particularly broad specificity; although bonds involving phenylalanine and leucine are preferred, many others are also cleaved to some extent. The polypeptide is Pepsin A-4 (PGA4) (Homo sapiens (Human)).